The primary structure comprises 84 residues: Magnetosome protein MamR (84 aa).

It belongs to the magnetosome MamR family.

It localises to the magnetosome. May play a role in controlling magnetite number and size but not in control of magnetite morphology. The polypeptide is Magnetosome protein MamR (Paramagnetospirillum magneticum (strain ATCC 700264 / AMB-1) (Magnetospirillum magneticum)).